A 275-amino-acid polypeptide reads, in one-letter code: Large ribosomal subunit protein uL2cz (275 aa).

Disordered regions lie at residues 1 to 22 (MAIHLYKTSTPSTRNGAVDSQV) and 226 to 275 (NPVD…RRRK).

The protein belongs to the universal ribosomal protein uL2 family. As to quaternary structure, part of the 50S ribosomal subunit.

The protein resides in the plastid. It localises to the chloroplast. This chain is Large ribosomal subunit protein uL2cz (rpl2-A), found in Chloranthus spicatus (Chulantree).